Reading from the N-terminus, the 184-residue chain is MGIDLVKAGRVKKPGRKALVSKNPYLRLLVKLYKFLSRRTDHSFNKVVLKRLLMPRRFKAPLSLSKLSKHMEKRPDNTAVVVGTVTNDERMDVVPKLSVCALRVTETARKRILASGGEVLTFDQLVARSPTGSRCTLLRGATKAREAVKHFRNEVKGNPKPYVRSKGRKFEKARGRRHSRAFKV.

Belongs to the eukaryotic ribosomal protein eL18 family.

Its subcellular location is the cytoplasm. The chain is Large ribosomal subunit protein eL18 (RPL18) from Theileria parva (East coast fever infection agent).